The sequence spans 358 residues: Photosystem II protein D1 1 (358 aa).

The next 3 membrane-spanning stretches (helical) occupy residues 28–45 (YVGWFGVLMIPCLLAATI), 117–132 (HFLIGISAYMGRQWEL), and 141–155 (WICVAYSAPLSAAFA). A chlorophyll a-binding site is contributed by histidine 117. Tyrosine 125 contributes to the pheophytin a binding site. The [CaMn4O5] cluster site is built by aspartate 169 and glutamate 188. Residues 196 to 217 (FHMLGVAGVFGGSLFSAMHGSL) traverse the membrane as a helical segment. Histidine 197 contributes to the chlorophyll a binding site. Residues histidine 214 and 263–264 (SF) contribute to the a quinone site. Histidine 214 is a Fe cation binding site. Histidine 271 is a Fe cation binding site. A helical membrane pass occupies residues 273–287 (FLGAWPVIGIWFTSM). [CaMn4O5] cluster-binding residues include histidine 331, glutamate 332, aspartate 341, and alanine 343. Residues 344-358 (AAESTPVALQAPAIG) constitute a propeptide that is removed on maturation.

This sequence belongs to the reaction center PufL/M/PsbA/D family. As to quaternary structure, PSII is composed of 1 copy each of membrane proteins PsbA, PsbB, PsbC, PsbD, PsbE, PsbF, PsbH, PsbI, PsbJ, PsbK, PsbL, PsbM, PsbT, PsbX, PsbY, PsbZ, Psb30/Ycf12, peripheral proteins PsbO, CyanoQ (PsbQ), PsbU, PsbV and a large number of cofactors. It forms dimeric complexes. Requires The D1/D2 heterodimer binds P680, chlorophylls that are the primary electron donor of PSII, and subsequent electron acceptors. It shares a non-heme iron and each subunit binds pheophytin, quinone, additional chlorophylls, carotenoids and lipids. D1 provides most of the ligands for the Mn4-Ca-O5 cluster of the oxygen-evolving complex (OEC). There is also a Cl(-1) ion associated with D1 and D2, which is required for oxygen evolution. The PSII complex binds additional chlorophylls, carotenoids and specific lipids. as cofactor. Tyr-160 forms a radical intermediate that is referred to as redox-active TyrZ, YZ or Y-Z. Post-translationally, C-terminally processed by CtpA; processing is essential to allow assembly of the oxygen-evolving complex and thus photosynthetic growth.

The protein resides in the cellular thylakoid membrane. The enzyme catalyses 2 a plastoquinone + 4 hnu + 2 H2O = 2 a plastoquinol + O2. Photosystem II (PSII) is a light-driven water:plastoquinone oxidoreductase that uses light energy to abstract electrons from H(2)O, generating O(2) and a proton gradient subsequently used for ATP formation. It consists of a core antenna complex that captures photons, and an electron transfer chain that converts photonic excitation into a charge separation. The D1/D2 (PsbA/PsbD) reaction center heterodimer binds P680, the primary electron donor of PSII as well as several subsequent electron acceptors. The polypeptide is Photosystem II protein D1 1 (Synechococcus sp. (strain CC9902)).